Reading from the N-terminus, the 151-residue chain is Small ribosomal subunit protein uS15 (151 aa).

Phosphoserine occurs at positions 21 and 32.

The protein belongs to the universal ribosomal protein uS15 family. Component of the small ribosomal subunit (SSU). Mature yeast ribosomes consist of a small (40S) and a large (60S) subunit. The 40S small subunit contains 1 molecule of ribosomal RNA (18S rRNA) and at least 33 different proteins. The large 60S subunit contains 3 rRNA molecules (25S, 5.8S and 5S rRNA) and at least 46 different proteins.

Its subcellular location is the cytoplasm. Its function is as follows. Component of the ribosome, a large ribonucleoprotein complex responsible for the synthesis of proteins in the cell. The small ribosomal subunit (SSU) binds messenger RNAs (mRNAs) and translates the encoded message by selecting cognate aminoacyl-transfer RNA (tRNA) molecules. The large subunit (LSU) contains the ribosomal catalytic site termed the peptidyl transferase center (PTC), which catalyzes the formation of peptide bonds, thereby polymerizing the amino acids delivered by tRNAs into a polypeptide chain. The nascent polypeptides leave the ribosome through a tunnel in the LSU and interact with protein factors that function in enzymatic processing, targeting, and the membrane insertion of nascent chains at the exit of the ribosomal tunnel. This Schizosaccharomyces pombe (strain 972 / ATCC 24843) (Fission yeast) protein is Small ribosomal subunit protein uS15 (rps13).